A 388-amino-acid polypeptide reads, in one-letter code: Succinyl-diaminopimelate desuccinylase (388 aa).

His-71 lines the Zn(2+) pocket. Asp-73 is an active-site residue. Position 104 (Asp-104) interacts with Zn(2+). Glu-143 (proton acceptor) is an active-site residue. Residues Glu-144, Glu-172, and His-361 each contribute to the Zn(2+) site.

This sequence belongs to the peptidase M20A family. DapE subfamily. As to quaternary structure, homodimer. Requires Zn(2+) as cofactor. The cofactor is Co(2+).

The enzyme catalyses N-succinyl-(2S,6S)-2,6-diaminopimelate + H2O = (2S,6S)-2,6-diaminopimelate + succinate. It participates in amino-acid biosynthesis; L-lysine biosynthesis via DAP pathway; LL-2,6-diaminopimelate from (S)-tetrahydrodipicolinate (succinylase route): step 3/3. Its function is as follows. Catalyzes the hydrolysis of N-succinyl-L,L-diaminopimelic acid (SDAP), forming succinate and LL-2,6-diaminopimelate (DAP), an intermediate involved in the bacterial biosynthesis of lysine and meso-diaminopimelic acid, an essential component of bacterial cell walls. This is Succinyl-diaminopimelate desuccinylase from Bradyrhizobium diazoefficiens (strain JCM 10833 / BCRC 13528 / IAM 13628 / NBRC 14792 / USDA 110).